The sequence spans 400 residues: Argininosuccinate synthase (400 aa).

ATP is bound by residues 11–19 (AYSGGLDTS) and Ala38. Residues Tyr89 and Ser94 each coordinate L-citrulline. Gly119 contributes to the ATP binding site. Positions 121, 125, and 126 each coordinate L-aspartate. Asn125 serves as a coordination point for L-citrulline. 5 residues coordinate L-citrulline: Arg129, Ser179, Ser188, Glu264, and Tyr276.

Belongs to the argininosuccinate synthase family. Type 1 subfamily. Homotetramer.

It is found in the cytoplasm. It carries out the reaction L-citrulline + L-aspartate + ATP = 2-(N(omega)-L-arginino)succinate + AMP + diphosphate + H(+). The protein operates within amino-acid biosynthesis; L-arginine biosynthesis; L-arginine from L-ornithine and carbamoyl phosphate: step 2/3. This chain is Argininosuccinate synthase, found in Oleidesulfovibrio alaskensis (strain ATCC BAA-1058 / DSM 17464 / G20) (Desulfovibrio alaskensis).